The following is a 125-amino-acid chain: Small ribosomal subunit protein bS6m (125 aa).

Belongs to the bacterial ribosomal protein bS6 family. As to quaternary structure, component of the mitochondrial small ribosomal subunit (mt-SSU). Mature mammalian 55S mitochondrial ribosomes consist of a small (28S) and a large (39S) subunit. The 28S small subunit contains a 12S ribosomal RNA (12S mt-rRNA) and 30 different proteins. The 39S large subunit contains a 16S rRNA (16S mt-rRNA), a copy of mitochondrial valine transfer RNA (mt-tRNA(Val)), which plays an integral structural role, and 52 different proteins.

It is found in the mitochondrion. This Homo sapiens (Human) protein is Small ribosomal subunit protein bS6m (MRPS6).